Consider the following 102-residue polypeptide: MAVQQKIRIKLKSYDHSLVDKWAVKIIDVVKQTDAIIFGPIPLPTKTHVYTVNRSPHVDKKSREQFSFSSHKRLIEIIPTGRTIDMLMKLELPSGVDVEIKS.

This sequence belongs to the universal ribosomal protein uS10 family. As to quaternary structure, part of the 30S ribosomal subunit.

In terms of biological role, involved in the binding of tRNA to the ribosomes. The sequence is that of Small ribosomal subunit protein uS10 from Chlorobium phaeobacteroides (strain BS1).